The sequence spans 338 residues: Holliday junction branch migration complex subunit RuvB (338 aa).

Residues 4–184 (ADRLMSAAAV…FGIVQRLEFY (181 aa)) form a large ATPase domain (RuvB-L) region. ATP contacts are provided by residues isoleucine 23, arginine 24, glycine 65, lysine 68, threonine 69, threonine 70, 131–133 (EDY), arginine 174, tyrosine 184, and arginine 221. Residue threonine 69 coordinates Mg(2+). The tract at residues 185 to 255 (QTGDLQHIVS…VAVSALNMLN (71 aa)) is small ATPAse domain (RuvB-S). The tract at residues 258 to 338 (TEGFDFMDRK…GLEEHGGDPE (81 aa)) is head domain (RuvB-H). Residues arginine 294, arginine 313, and arginine 318 each contribute to the DNA site.

The protein belongs to the RuvB family. Homohexamer. Forms an RuvA(8)-RuvB(12)-Holliday junction (HJ) complex. HJ DNA is sandwiched between 2 RuvA tetramers; dsDNA enters through RuvA and exits via RuvB. An RuvB hexamer assembles on each DNA strand where it exits the tetramer. Each RuvB hexamer is contacted by two RuvA subunits (via domain III) on 2 adjacent RuvB subunits; this complex drives branch migration. In the full resolvosome a probable DNA-RuvA(4)-RuvB(12)-RuvC(2) complex forms which resolves the HJ.

It localises to the cytoplasm. It carries out the reaction ATP + H2O = ADP + phosphate + H(+). In terms of biological role, the RuvA-RuvB-RuvC complex processes Holliday junction (HJ) DNA during genetic recombination and DNA repair, while the RuvA-RuvB complex plays an important role in the rescue of blocked DNA replication forks via replication fork reversal (RFR). RuvA specifically binds to HJ cruciform DNA, conferring on it an open structure. The RuvB hexamer acts as an ATP-dependent pump, pulling dsDNA into and through the RuvAB complex. RuvB forms 2 homohexamers on either side of HJ DNA bound by 1 or 2 RuvA tetramers; 4 subunits per hexamer contact DNA at a time. Coordinated motions by a converter formed by DNA-disengaged RuvB subunits stimulates ATP hydrolysis and nucleotide exchange. Immobilization of the converter enables RuvB to convert the ATP-contained energy into a lever motion, pulling 2 nucleotides of DNA out of the RuvA tetramer per ATP hydrolyzed, thus driving DNA branch migration. The RuvB motors rotate together with the DNA substrate, which together with the progressing nucleotide cycle form the mechanistic basis for DNA recombination by continuous HJ branch migration. Branch migration allows RuvC to scan DNA until it finds its consensus sequence, where it cleaves and resolves cruciform DNA. This Sodalis glossinidius (strain morsitans) protein is Holliday junction branch migration complex subunit RuvB.